A 132-amino-acid polypeptide reads, in one-letter code: Large ribosomal subunit protein uL14 (132 aa).

Belongs to the universal ribosomal protein uL14 family. As to quaternary structure, part of the 50S ribosomal subunit. Forms a cluster with proteins L3 and L24e, part of which may contact the 16S rRNA in 2 intersubunit bridges.

Functionally, binds to 23S rRNA. Forms part of two intersubunit bridges in the 70S ribosome. This chain is Large ribosomal subunit protein uL14, found in Methanococcus vannielii.